The chain runs to 321 residues: Low affinity immunoglobulin epsilon Fc receptor (321 aa).

Residues M1–G21 lie on the Cytoplasmic side of the membrane. S-palmitoyl cysteine attachment occurs at residues C17 and C18. A helical; Signal-anchor for type II membrane protein transmembrane segment spans residues T22 to W47. The Extracellular portion of the chain corresponds to D48 to S321. N-linked (GlcNAc...) asparagine glycosylation occurs at N63. The disordered stretch occupies residues Q66–S85. 3 repeats span residues K69–S89, Q90–S110, and W111–R131. Cystine bridges form between C160–C288, C163–C174, C191–C282, and C259–C273. Residues T162–R284 form the C-type lectin domain. The Ca(2+) site is built by E249, T251, N269, and D270. The interval P290–S321 is disordered. The O-linked (Xyl...) (chondroitin sulfate) serine glycan is linked to S296.

Homotrimer. Interacts (via C-type lectin domain) with IGHE (via CH3 region); this interaction regulates IgE homeostasis. Interacts (via the C-terminus) with CR2/CD21 (via Sushi domain 1 and 2). In terms of processing, N- and O-glycosylated. The secreted form sCD23 is produced by ADAM10-mediated ectodomain shedding. Detected in urine (at protein level).

It is found in the cell membrane. Its subcellular location is the secreted. Functionally, low-affinity receptor for immunoglobulin E (IgE) and CR2/CD21. Has essential roles in the regulation of IgE production and in the differentiation of B cells. On B cells, initiates IgE-dependent antigen uptake and presentation to T cells. On macrophages, upon IgE binding and antigen cross-linking induces intracellular killing of parasites through activation of L-Arginine-nitric oxide pathway. The protein is Low affinity immunoglobulin epsilon Fc receptor (FCER2) of Homo sapiens (Human).